A 401-amino-acid polypeptide reads, in one-letter code: Alpha-(1,4)-fucosyltransferase (401 aa).

Residues methionine 1–arginine 4 are Cytoplasmic-facing. The chain crosses the membrane as a helical; Signal-anchor for type II membrane protein span at residues tyrosine 5–isoleucine 27. At leucine 28–valine 401 the chain is on the lumenal side. Residue asparagine 85 is glycosylated (N-linked (GlcNAc...) asparagine).

The protein belongs to the glycosyltransferase 10 family. As to expression, present in root, stem, flower buds and green siliques.

Its subcellular location is the golgi apparatus. It localises to the golgi stack membrane. The protein operates within protein modification; protein glycosylation. Functionally, may be involved in cell wall synthesis. Catalyzes alpha-1,4 glycosidic linkages and generates Lewis-a epitopes. The protein is Alpha-(1,4)-fucosyltransferase (FUT13) of Arabidopsis thaliana (Mouse-ear cress).